A 126-amino-acid polypeptide reads, in one-letter code: MAILGLGTDIVEIARIEAVIERSGERLARRVLTDAEWAHYQQHQQPVRFLAKRFAVKEAAAKAFGTGIRNGLAFNQFEVFNDELGKPCLRFFAKAAELAEQMGVRHVHVTLADERRYACATVIVES.

Mg(2+) is bound by residues aspartate 9 and glutamate 58.

Belongs to the P-Pant transferase superfamily. AcpS family. Requires Mg(2+) as cofactor.

Its subcellular location is the cytoplasm. The enzyme catalyses apo-[ACP] + CoA = holo-[ACP] + adenosine 3',5'-bisphosphate + H(+). Transfers the 4'-phosphopantetheine moiety from coenzyme A to a Ser of acyl-carrier-protein. This chain is Holo-[acyl-carrier-protein] synthase, found in Pectobacterium carotovorum subsp. carotovorum (strain PC1).